A 55-amino-acid polypeptide reads, in one-letter code: Large ribosomal subunit protein bL33 (55 aa).

Residues 1-11 are compositionally biased toward basic and acidic residues; the sequence is MAKGGREKIKL. The tract at residues 1–29 is disordered; the sequence is MAKGGREKIKLESTAGTGHFYTTTKNKKT. Residues 14–24 are compositionally biased toward polar residues; the sequence is TAGTGHFYTTT.

It belongs to the bacterial ribosomal protein bL33 family.

This chain is Large ribosomal subunit protein bL33, found in Thiobacillus denitrificans (strain ATCC 25259 / T1).